A 265-amino-acid polypeptide reads, in one-letter code: Glycine/sarcosine N-methyltransferase (265 aa).

Residues Y28, W36, R45, A69, D90, 116–117, and L134 contribute to the S-adenosyl-L-methionine site; that span reads DW. Substrate-binding residues include N136, R169, and Y208.

Belongs to the class I-like SAM-binding methyltransferase superfamily. Glycine N-methyltransferase family. As to quaternary structure, monomer.

It catalyses the reaction glycine + 2 S-adenosyl-L-methionine = N,N-dimethylglycine + 2 S-adenosyl-L-homocysteine + 2 H(+). It carries out the reaction glycine + S-adenosyl-L-methionine = sarcosine + S-adenosyl-L-homocysteine + H(+). The catalysed reaction is sarcosine + S-adenosyl-L-methionine = N,N-dimethylglycine + S-adenosyl-L-homocysteine + H(+). It functions in the pathway amine and polyamine biosynthesis; betaine biosynthesis via glycine pathway; betaine from glycine: step 1/3. Its pathway is amine and polyamine biosynthesis; betaine biosynthesis via glycine pathway; betaine from glycine: step 2/3. Inhibited by acetate, dimethylglycine and S-adenosyl-L-homocysteine. In terms of biological role, catalyzes the methylation of glycine and sarcosine to sarcosine and dimethylglycine, respectively, with S-adenosylmethionine (AdoMet) acting as the methyl donor. In Aphanothece halophytica, this protein is Glycine/sarcosine N-methyltransferase.